Here is a 331-residue protein sequence, read N- to C-terminus: DNA-directed RNA polymerase subunit alpha (331 aa).

Residues 1-226 (MLIAQRPTLT…ELFGLARELN (226 aa)) are alpha N-terminal domain (alpha-NTD). The interval 243 to 331 (LSSELSMPIE…SYDEDETTTN (89 aa)) is alpha C-terminal domain (alpha-CTD).

This sequence belongs to the RNA polymerase alpha chain family. As to quaternary structure, homodimer. The RNAP catalytic core consists of 2 alpha, 1 beta, 1 beta' and 1 omega subunit. When a sigma factor is associated with the core the holoenzyme is formed, which can initiate transcription.

The catalysed reaction is RNA(n) + a ribonucleoside 5'-triphosphate = RNA(n+1) + diphosphate. In terms of biological role, DNA-dependent RNA polymerase catalyzes the transcription of DNA into RNA using the four ribonucleoside triphosphates as substrates. The sequence is that of DNA-directed RNA polymerase subunit alpha from Clavibacter michiganensis subsp. michiganensis (strain NCPPB 382).